A 380-amino-acid polypeptide reads, in one-letter code: 1-deoxy-D-xylulose 5-phosphate reductoisomerase (380 aa).

Positions 10, 11, 12, 13, 36, 37, 38, and 120 each coordinate NADPH. Residue Lys-121 participates in 1-deoxy-D-xylulose 5-phosphate binding. Glu-122 is a binding site for NADPH. Asp-146 lines the Mn(2+) pocket. 1-deoxy-D-xylulose 5-phosphate-binding residues include Ser-147, Glu-148, Ser-172, and His-195. Residue Glu-148 participates in Mn(2+) binding. An NADPH-binding site is contributed by Gly-201. Residues Ser-208, Asn-213, Lys-214, and Glu-217 each coordinate 1-deoxy-D-xylulose 5-phosphate. Glu-217 provides a ligand contact to Mn(2+).

This sequence belongs to the DXR family. Mg(2+) serves as cofactor. Requires Mn(2+) as cofactor.

It catalyses the reaction 2-C-methyl-D-erythritol 4-phosphate + NADP(+) = 1-deoxy-D-xylulose 5-phosphate + NADPH + H(+). It participates in isoprenoid biosynthesis; isopentenyl diphosphate biosynthesis via DXP pathway; isopentenyl diphosphate from 1-deoxy-D-xylulose 5-phosphate: step 1/6. Catalyzes the NADPH-dependent rearrangement and reduction of 1-deoxy-D-xylulose-5-phosphate (DXP) to 2-C-methyl-D-erythritol 4-phosphate (MEP). In Listeria monocytogenes serovar 1/2a (strain ATCC BAA-679 / EGD-e), this protein is 1-deoxy-D-xylulose 5-phosphate reductoisomerase.